Reading from the N-terminus, the 603-residue chain is UvrABC system protein C (603 aa).

The GIY-YIG domain occupies 13-92; the sequence is SSPGVYLMKD…IKQHHPKYNV (80 aa). Positions 205–240 constitute a UVR domain; it reads EEVVKDLEKVIQKASDNLEFEQAANYYRTLSLIKQA.

This sequence belongs to the UvrC family. As to quaternary structure, interacts with UvrB in an incision complex.

It is found in the cytoplasm. In terms of biological role, the UvrABC repair system catalyzes the recognition and processing of DNA lesions. UvrC both incises the 5' and 3' sides of the lesion. The N-terminal half is responsible for the 3' incision and the C-terminal half is responsible for the 5' incision. The polypeptide is UvrABC system protein C (Chlamydia pneumoniae (Chlamydophila pneumoniae)).